Consider the following 328-residue polypeptide: dITP/XTP pyrophosphatase (328 aa).

The interval 1–129 (MSEKIYEYKD…ATSEQGFGDI (129 aa)) is unknown. The segment at 130–324 (ILIATRNEGK…KLMEVFPAWQ (195 aa)) is NTP pyrophosphatase. 134–139 (TRNEGK) is a substrate binding site. The active-site Proton acceptor is D196. D196 is a Mg(2+) binding site. Substrate is bound by residues S197, 280–283 (FGYD), K303, and 308–309 (HR).

This sequence belongs to the HAM1 NTPase family. In terms of assembly, homodimer. Requires Mg(2+) as cofactor.

The catalysed reaction is XTP + H2O = XMP + diphosphate + H(+). It carries out the reaction dITP + H2O = dIMP + diphosphate + H(+). The enzyme catalyses ITP + H2O = IMP + diphosphate + H(+). Its function is as follows. Pyrophosphatase that catalyzes the hydrolysis of nucleoside triphosphates to their monophosphate derivatives, with a high preference for the non-canonical purine nucleotides XTP (xanthosine triphosphate), dITP (deoxyinosine triphosphate) and ITP. Seems to function as a house-cleaning enzyme that removes non-canonical purine nucleotides from the nucleotide pool, thus preventing their incorporation into DNA/RNA and avoiding chromosomal lesions. This Streptococcus pyogenes serotype M1 protein is dITP/XTP pyrophosphatase.